The primary structure comprises 218 residues: 2-phospho-L-lactate guanylyltransferase (218 aa).

This sequence belongs to the CofC family. In terms of assembly, homodimer.

It catalyses the reaction (2S)-2-phospholactate + GTP + H(+) = (2S)-lactyl-2-diphospho-5'-guanosine + diphosphate. The protein operates within cofactor biosynthesis; coenzyme F420 biosynthesis. In terms of biological role, guanylyltransferase that catalyzes the activation of (2S)-2-phospholactate (2-PL) as (2S)-lactyl-2-diphospho-5'-guanosine, via the condensation of 2-PL with GTP. It is involved in the biosynthesis of coenzyme F420, a hydride carrier cofactor. In Methanocaldococcus fervens (strain DSM 4213 / JCM 15782 / AG86) (Methanococcus fervens), this protein is 2-phospho-L-lactate guanylyltransferase.